Consider the following 208-residue polypeptide: ATP-dependent Clp protease proteolytic subunit (208 aa).

The active-site Nucleophile is serine 105. Histidine 130 is a catalytic residue.

Belongs to the peptidase S14 family. As to quaternary structure, fourteen ClpP subunits assemble into 2 heptameric rings which stack back to back to give a disk-like structure with a central cavity, resembling the structure of eukaryotic proteasomes.

It is found in the cytoplasm. The catalysed reaction is Hydrolysis of proteins to small peptides in the presence of ATP and magnesium. alpha-casein is the usual test substrate. In the absence of ATP, only oligopeptides shorter than five residues are hydrolyzed (such as succinyl-Leu-Tyr-|-NHMec, and Leu-Tyr-Leu-|-Tyr-Trp, in which cleavage of the -Tyr-|-Leu- and -Tyr-|-Trp bonds also occurs).. In terms of biological role, cleaves peptides in various proteins in a process that requires ATP hydrolysis. Has a chymotrypsin-like activity. Plays a major role in the degradation of misfolded proteins. The protein is ATP-dependent Clp protease proteolytic subunit of Xylella fastidiosa (strain M23).